The following is a 203-amino-acid chain: Holliday junction branch migration complex subunit RuvA (203 aa).

The domain I stretch occupies residues 1–64; it reads MIGRLRGIVL…EDAQLLFGFN (64 aa). The interval 65–142 is domain II; it reads NKQERTLFRE…KGLHGDLFTP (78 aa). The tract at residues 143 to 154 is flexible linker; sequence AADLVLTSPASP. The segment at 155 to 203 is domain III; sequence AVDDAEAEAVAALVSLGYKPQEASRMVSKVAQADASSETLIREALRAAL.

It belongs to the RuvA family. In terms of assembly, homotetramer. Forms an RuvA(8)-RuvB(12)-Holliday junction (HJ) complex. HJ DNA is sandwiched between 2 RuvA tetramers; dsDNA enters through RuvA and exits via RuvB. An RuvB hexamer assembles on each DNA strand where it exits the tetramer. Each RuvB hexamer is contacted by two RuvA subunits (via domain III) on 2 adjacent RuvB subunits; this complex drives branch migration. In the full resolvosome a probable DNA-RuvA(4)-RuvB(12)-RuvC(2) complex forms which resolves the HJ.

It localises to the cytoplasm. Its function is as follows. The RuvA-RuvB-RuvC complex processes Holliday junction (HJ) DNA during genetic recombination and DNA repair, while the RuvA-RuvB complex plays an important role in the rescue of blocked DNA replication forks via replication fork reversal (RFR). RuvA specifically binds to HJ cruciform DNA, conferring on it an open structure. The RuvB hexamer acts as an ATP-dependent pump, pulling dsDNA into and through the RuvAB complex. HJ branch migration allows RuvC to scan DNA until it finds its consensus sequence, where it cleaves and resolves the cruciform DNA. This Cronobacter sakazakii (strain ATCC BAA-894) (Enterobacter sakazakii) protein is Holliday junction branch migration complex subunit RuvA.